A 285-amino-acid chain; its full sequence is Gap junction Cx32.2 protein (285 aa).

Over 2–19 the chain is Cytoplasmic; that stretch reads GDLGFLSKLLDQVQSHST. A helical transmembrane segment spans residues 20–40; sequence VIGKIWMTVLFLFRIMVLGAG. Residues 41-76 are Extracellular-facing; it reads AESVWGDEQSDFTCNTQQPGCENVCYDWTFPISHIR. A helical transmembrane segment spans residues 77 to 99; the sequence is FWVLQIIFVSTPTLIYLGHAMHI. Topologically, residues 100–148 are cytoplasmic; it reads IQQETKLRARLSSPGGSRLCKQPKYTNEQGKVKIKGNLLGSYLTQLVFK. Residues 149–171 traverse the membrane as a helical segment; it reads IIIEAAFIVGQYYLYGFIMVPMF. Residues 172 to 194 are Extracellular-facing; that stretch reads PCSKKPCPFTVECYMSRPTEKTI. The chain crosses the membrane as a helical span at residues 195–217; the sequence is FIIFMLVVACVSLLLNVIEVFYL. Residues 218-285 are Cytoplasmic-facing; that stretch reads ICTRVRCGSR…AKEEKRLLSH (68 aa). Positions 264–285 are disordered; sequence ETSQSIGGSLDGAKEEKRLLSH. Residues 275-285 are compositionally biased toward basic and acidic residues; that stretch reads GAKEEKRLLSH.

The protein belongs to the connexin family. Beta-type (group I) subfamily. As to quaternary structure, a connexon is composed of a hexamer of connexins.

It is found in the cell membrane. The protein resides in the cell junction. It localises to the gap junction. One gap junction consists of a cluster of closely packed pairs of transmembrane channels, the connexons, through which materials of low MW diffuse from one cell to a neighboring cell. May be involved in ovarian follicular maturation. This chain is Gap junction Cx32.2 protein, found in Micropogonias undulatus (Atlantic croaker).